The sequence spans 539 residues: NADH-quinone oxidoreductase subunit N 2 (539 aa).

Helical transmembrane passes span 11 to 31 (LIPE…DVLT), 52 to 72 (LMGL…FSWM), 106 to 126 (PLTH…VILT), 141 to 161 (LILF…LIMI), 193 to 213 (YIFG…LLGL), 248 to 268 (GVAI…VAIV), 296 to 316 (AGFF…SILG), 329 to 349 (WTSL…LAAL), 357 to 377 (MLAY…VGTQ), 385 to 405 (LMYL…LALV), 429 to 449 (LLLT…GFFV), 462 to 484 (AKWL…LRFL), and 500 to 520 (VGFG…GLGI).

The protein belongs to the complex I subunit 2 family. In terms of assembly, NDH-1 is composed of 14 different subunits. Subunits NuoA, H, J, K, L, M, N constitute the membrane sector of the complex.

The protein localises to the cell membrane. The catalysed reaction is a quinone + NADH + 5 H(+)(in) = a quinol + NAD(+) + 4 H(+)(out). In terms of biological role, NDH-1 shuttles electrons from NADH, via FMN and iron-sulfur (Fe-S) centers, to quinones in the respiratory chain. The immediate electron acceptor for the enzyme in this species is believed to be ubiquinone. Couples the redox reaction to proton translocation (for every two electrons transferred, four hydrogen ions are translocated across the cytoplasmic membrane), and thus conserves the redox energy in a proton gradient. The polypeptide is NADH-quinone oxidoreductase subunit N 2 (Herpetosiphon aurantiacus (strain ATCC 23779 / DSM 785 / 114-95)).